The primary structure comprises 318 residues: Basic leucine zipper (bZIP) transcription factor atfB (318 aa).

The segment at Phe114–Gln157 is disordered. A basic motif region spans residues Arg160–Lys199. The bZIP domain maps to Arg160–His223. Positions Leu202–Leu216 are leucine-zipper. The tract at residues Asp275 to Glu301 is disordered.

It belongs to the bZIP family. ATF subfamily.

The protein resides in the nucleus. In terms of biological role, transcription factor that acts as a key player in the regulatory circuit that integrates secondary metabolism and cellular response to oxidative stress. Regulates the genes involved in development and stress response through direct binding to their promoters. Particularly involved in the resistance to oxidative stress in asexual conidiospores. This Aspergillus oryzae (strain ATCC 42149 / RIB 40) (Yellow koji mold) protein is Basic leucine zipper (bZIP) transcription factor atfB.